Here is a 390-residue protein sequence, read N- to C-terminus: Pre-mycofactocin synthase (390 aa).

In terms of domain architecture, FMN hydroxy acid dehydrogenase spans 1-383; that stretch reads MADEWFETVA…RSDDILIPAD (383 aa). Positions 108, 128, 156, and 254 each coordinate FMN. Catalysis depends on His-278, which acts as the Proton acceptor. Residues 309-313 and 332-333 each bind FMN; these read DGGIR and GR.

This sequence belongs to the FMN-dependent alpha-hydroxy acid dehydrogenase family. It depends on FMN as a cofactor.

It carries out the reaction 3-amino-5-[(4-hydroxyphenyl)methyl]-4,4-dimethyl-2-pyrrolidin-2-one + O2 + H2O = pre-mycofactocin + H2O2 + NH4(+). Its function is as follows. Involved in the biosynthesis of the enzyme cofactor mycofactocin (MFT). Catalyzes the oxidative deamination of AHDP (3-amino-5-[(4-hydroxyphenyl)methyl]-4,4-dimethyl-2-pyrrolidin-2-one), forming an alpha-keto amide moiety on the resulting molecule, which is called pre-mycofactocin (PMFT). This reaction occurs via a 5-[(4-hydroxyphenyl)methyl]-3-imino-4,4-dimethylpyrrolidin-2-one intermediate, which converts to PMFT. The alpha-keto amide moiety is the redox-active center for the redox activity of mycofactocin. The chain is Pre-mycofactocin synthase from Mycobacterium ulcerans (strain Agy99).